A 179-amino-acid chain; its full sequence is Segregation and condensation protein B (179 aa).

The protein belongs to the ScpB family. As to quaternary structure, homodimer. Homodimerization may be required to stabilize the binding of ScpA to the Smc head domains. Component of a cohesin-like complex composed of ScpA, ScpB and the Smc homodimer, in which ScpA and ScpB bind to the head domain of Smc. The presence of the three proteins is required for the association of the complex with DNA.

Its subcellular location is the cytoplasm. Its function is as follows. Participates in chromosomal partition during cell division. May act via the formation of a condensin-like complex containing Smc and ScpA that pull DNA away from mid-cell into both cell halves. This chain is Segregation and condensation protein B, found in Streptococcus equi subsp. zooepidemicus (strain H70).